The chain runs to 1042 residues: FHIP family protein AAEL005291 (1042 aa).

The span at 1-14 (MSWLRSSPLRQSFS) shows a compositional bias: polar residues. 4 disordered regions span residues 1 to 31 (MSWL…GGNS), 494 to 514 (NNTS…PQGG), 821 to 866 (PHSG…KRND), and 905 to 977 (SNSS…GSPH). Residues 839–859 (VSMTSNLSQTTPMQLTPSSSY) show a composition bias toward polar residues. Low complexity-rich tracts occupy residues 905–940 (SNSS…FMGS) and 956–976 (PSIG…TGSP).

The protein belongs to the FHIP family.

This is FHIP family protein AAEL005291 from Aedes aegypti (Yellowfever mosquito).